Reading from the N-terminus, the 45-residue chain is FKLGSFLKKAWKSKLAKKLRAKGKEMLKDYAKGLLEGGSEEVPGQ.

In terms of assembly, monomer and homodimer. As to expression, expressed by the venom gland.

It localises to the secreted. The protein resides in the target cell membrane. Functionally, at high concentrations, acts as a pore former in cellular membranes and causes the leakage of the cells. At submicromolar concentrations, degranulates granulocytes and has a weak hemolytic activity against human red blood cells. Also strongly inhibits the production of superoxide anions. Has a strong antibacterial activity against Gram-negative bacteria but is less active against Gram-positive bacteria. Also has antifungal activity. Induces reversible G-protein dependent Ca(2+) release from intracellular stores and increase Ca(2+) influx in HL-60 cells. Induces the activation of the Rac pathway in granulocytes. Synergistically enhances the excitatory effects of short and long chain ion-channel-specific neurotoxins by interaction with the neuronal membranes. The polypeptide is Parabutoporin (Parabuthus schlechteri (Scorpion)).